A 129-amino-acid chain; its full sequence is UPF0146 protein VNG_2609C (129 aa).

It belongs to the UPF0146 family.

The protein is UPF0146 protein VNG_2609C of Halobacterium salinarum (strain ATCC 700922 / JCM 11081 / NRC-1) (Halobacterium halobium).